The chain runs to 416 residues: MTYVDTLGQQAKVASRQIAKLSTAAKNDLLNQVAKALVAESDYIITENAKDIANASENGISKIMQDRLLLTEDRIAGIAEGVRQVADLQDPIGQVVRGYTNLDGLKIVQKRVPMGVIAMIFESRPNVSIDAFSLAFKTNNAIILRGGRDAINSNKALVTVARKALKNAGITADAVQFVEDTSHEVAEELMVATKYVDLLIPRGGARLIQTVKEKAKVPVIETGVGNCHIYVDKYANLDMATQIVINAKTQRPSVCNAAESLVVHADIVEEFLPNLEKAISKIQSVEFRADERALKLMEKAVPASPEDFATEFLDYIMSVKVVDSLDEAINWINTYTTSHSEAIVTQDISRAEQFQDDVDAAAVYVNASTRFTDGFVFGLGAEIGISTQKMHARGPMGLEALTSTKFYINGQGQIRE.

This sequence belongs to the gamma-glutamyl phosphate reductase family.

It localises to the cytoplasm. It catalyses the reaction L-glutamate 5-semialdehyde + phosphate + NADP(+) = L-glutamyl 5-phosphate + NADPH + H(+). It participates in amino-acid biosynthesis; L-proline biosynthesis; L-glutamate 5-semialdehyde from L-glutamate: step 2/2. Catalyzes the NADPH-dependent reduction of L-glutamate 5-phosphate into L-glutamate 5-semialdehyde and phosphate. The product spontaneously undergoes cyclization to form 1-pyrroline-5-carboxylate. This is Gamma-glutamyl phosphate reductase from Streptococcus thermophilus (strain ATCC BAA-491 / LMD-9).